The sequence spans 274 residues: Protein RecA (274 aa).

Glycine 43–threonine 50 contributes to the ATP binding site.

This sequence belongs to the RecA family.

Its subcellular location is the cytoplasm. Functionally, can catalyze the hydrolysis of ATP in the presence of single-stranded DNA, the ATP-dependent uptake of single-stranded DNA by duplex DNA, and the ATP-dependent hybridization of homologous single-stranded DNAs. It interacts with LexA causing its activation and leading to its autocatalytic cleavage. The protein is Protein RecA of Neisseria pharyngis.